The following is a 427-amino-acid chain: Kynureninase (427 aa).

Pyridoxal 5'-phosphate-binding positions include Thr-104, Thr-105, 132 to 135 (FPSD), Asp-213, His-216, and Tyr-238. Lys-239 is subject to N6-(pyridoxal phosphate)lysine. Residues Trp-267 and Thr-295 each contribute to the pyridoxal 5'-phosphate site.

The protein belongs to the kynureninase family. As to quaternary structure, homodimer. It depends on pyridoxal 5'-phosphate as a cofactor.

It catalyses the reaction L-kynurenine + H2O = anthranilate + L-alanine + H(+). It carries out the reaction 3-hydroxy-L-kynurenine + H2O = 3-hydroxyanthranilate + L-alanine + H(+). Its pathway is amino-acid degradation; L-kynurenine degradation; L-alanine and anthranilate from L-kynurenine: step 1/1. It functions in the pathway cofactor biosynthesis; NAD(+) biosynthesis; quinolinate from L-kynurenine: step 2/3. Catalyzes the cleavage of L-kynurenine (L-Kyn) and L-3-hydroxykynurenine (L-3OHKyn) into anthranilic acid (AA) and 3-hydroxyanthranilic acid (3-OHAA), respectively. This chain is Kynureninase, found in Shouchella clausii (strain KSM-K16) (Alkalihalobacillus clausii).